The following is an 86-amino-acid chain: UPF0297 protein SERP1181 (86 aa).

Belongs to the UPF0297 family.

The polypeptide is UPF0297 protein SERP1181 (Staphylococcus epidermidis (strain ATCC 35984 / DSM 28319 / BCRC 17069 / CCUG 31568 / BM 3577 / RP62A)).